The sequence spans 271 residues: Putative hydro-lyase jk0403 (271 aa).

Belongs to the D-glutamate cyclase family.

This Corynebacterium jeikeium (strain K411) protein is Putative hydro-lyase jk0403.